The sequence spans 351 residues: Mediator of RNA polymerase II transcription subunit 4 (351 aa).

Residues 30 to 68 are a coiled coil; the sequence is QKLAEELLAAEAELSKSLKLLETHQNNNARLQQLRQETS. Disordered regions lie at residues 156–217 and 256–351; these read TQTQ…PAHL and PRGY…DEDD. Residues 163–177 show a composition bias toward polar residues; that stretch reads NSFNLSFNGTVSTPI. Over residues 182–198 the composition is skewed to low complexity; the sequence is PTPTTTNDTQPSTQLPP. Residues 257–308 are compositionally biased toward basic and acidic residues; the sequence is RGYDPAEQERRRVAEEKARREAEERARLEREEAERKGREERERMAREREAAR. The stretch at 262–311 forms a coiled coil; that stretch reads AEQERRRVAEEKARREAEERARLEREEAERKGREERERMAREREAARLRN. Acidic residues predominate over residues 340 to 351; that stretch reads ADDDEDDEDEDD.

This sequence belongs to the Mediator complex subunit 4 family. Component of the Mediator complex.

It is found in the nucleus. Component of the Mediator complex, a coactivator involved in the regulated transcription of nearly all RNA polymerase II-dependent genes. Mediator functions as a bridge to convey information from gene-specific regulatory proteins to the basal RNA polymerase II transcription machinery. Mediator is recruited to promoters by direct interactions with regulatory proteins and serves as a scaffold for the assembly of a functional preinitiation complex with RNA polymerase II and the general transcription factors. This chain is Mediator of RNA polymerase II transcription subunit 4 (MED4), found in Chaetomium globosum (strain ATCC 6205 / CBS 148.51 / DSM 1962 / NBRC 6347 / NRRL 1970) (Soil fungus).